The following is a 439-amino-acid chain: Mitochondrial distribution and morphology protein 12 (439 aa).

Residues 1–439 enclose the SMP-LTD domain; the sequence is MSIDINWEAA…VYPSFWTFLV (439 aa). Acidic residues predominate over residues 71–84; that stretch reads EEDEGDEDFSDDQD. 3 disordered regions span residues 71–104, 182–278, and 362–385; these read EEDE…GTWQ, TPLA…HEKK, and YIPG…RRDD. The segment covering 212–229 has biased composition (basic and acidic residues); it reads DYPRPVHRQTDTDIDSGH. The segment covering 230–255 has biased composition (polar residues); that stretch reads SRPSTADTLNSINSQRISNPALSHPH. The segment covering 256–269 has biased composition (basic and acidic residues); the sequence is SSNESHPDTRDHSP.

The protein belongs to the MDM12 family. In terms of assembly, component of the ER-mitochondria encounter structure (ERMES) or MDM complex, composed of MMM1, MDM10, MDM12 and MDM34. An MMM1 homodimer associates with one molecule of MDM12 on each side in a pairwise head-to-tail manner, and the SMP-LTD domains of MMM1 and MDM12 generate a continuous hydrophobic tunnel for phospholipid trafficking.

It is found in the mitochondrion outer membrane. Its subcellular location is the endoplasmic reticulum membrane. Its function is as follows. Component of the ERMES/MDM complex, which serves as a molecular tether to connect the endoplasmic reticulum (ER) and mitochondria. Components of this complex are involved in the control of mitochondrial shape and protein biogenesis, and function in nonvesicular lipid trafficking between the ER and mitochondria. MDM12 is required for the interaction of the ER-resident membrane protein MMM1 and the outer mitochondrial membrane-resident beta-barrel protein MDM10. The MDM12-MMM1 subcomplex functions in the major beta-barrel assembly pathway that is responsible for biogenesis of all mitochondrial outer membrane beta-barrel proteins, and acts in a late step after the SAM complex. The MDM10-MDM12-MMM1 subcomplex further acts in the TOM40-specific pathway after the action of the MDM12-MMM1 complex. Essential for establishing and maintaining the structure of mitochondria and maintenance of mtDNA nucleoids. The sequence is that of Mitochondrial distribution and morphology protein 12 from Uncinocarpus reesii (strain UAMH 1704).